Reading from the N-terminus, the 43-residue chain is Kappa-actitoxin-Avd4p (43 aa).

3 disulfide bridges follow: cysteine 4/cysteine 39, cysteine 6/cysteine 32, and cysteine 22/cysteine 40.

It is found in the secreted. Its subcellular location is the nematocyst. In terms of biological role, blocks Kv3 voltage-gated potassium channels. Reduces blood pressure. This is Kappa-actitoxin-Avd4p from Anemonia viridis (Snakelocks anemone).